Reading from the N-terminus, the 1114-residue chain is Kinesin-like protein KIN-12F (1114 aa).

The disordered stretch occupies residues 1-84; the sequence is MADNRIAGSL…RSQVSASRPR (84 aa). Composition is skewed to polar residues over residues 10 to 39 and 48 to 80; these read LPTSSKWSFLPKSVSSHFKPSSNPRSSNPD and PNIHNPRNQSVSSKSTAYKNQMDSPNCRSQVSA. The 333-residue stretch at 104–436 folds into the Kinesin motor domain; sequence HVKVVVRIKP…LRFGERAKAM (333 aa). ATP is bound at residue 175–182; the sequence is GQNGSGKT. Coiled coils occupy residues 761–791, 872–942, and 1038–1081; these read QQELEKLCSEQAAKIEQLTRLVGQHKLQTED, ARSF…LRRA, and EVLV…HKLE. Positions 1092–1114 are disordered; sequence NTLPESALQPLHQRNSAIEEEGM.

This sequence belongs to the TRAFAC class myosin-kinesin ATPase superfamily. Kinesin family. KIN-12 subfamily.

This Arabidopsis thaliana (Mouse-ear cress) protein is Kinesin-like protein KIN-12F.